Consider the following 360-residue polypeptide: WD repeat domain phosphoinositide-interacting protein 4 (360 aa).

7 WD repeats span residues Met1 to Val34, Lys40 to Asp84, Lys92 to Phe128, Arg133 to Leu174, Ser183 to Thr222, Lys227 to Leu266, and Gly284 to Asp329. The L/FRRG motif motif lies at Leu231 to Gly234.

The protein belongs to the WD repeat PROPPIN family. As to quaternary structure, interacts with WIPI1. Interacts with WIPI2. Interacts with ATG2A and ATG2B. Interacts with ULK1. May interact with the PRKAA1, PRKAA2, PRKAB1 and PRKAG1 subunits of the AMPK kinase. May interact with NUDC. As to expression, ubiquitously expressed, with high expression in skeletal muscle and heart. Weakly expressed in liver and placenta. Expression is down-regulated in pancreatic and in kidney tumors.

It is found in the preautophagosomal structure. The protein localises to the cytoplasm. Its activity is regulated as follows. Activated upon amino-acid starvation. Functionally, component of the autophagy machinery that controls the major intracellular degradation process by which cytoplasmic materials are packaged into autophagosomes and delivered to lysosomes for degradation. Binds phosphatidylinositol 3-phosphate (PtdIns3P). Activated by the STK11/AMPK signaling pathway upon starvation, WDR45 is involved in autophagosome assembly downstream of WIPI2, regulating the size of forming autophagosomes. Together with WIPI1, promotes ATG2 (ATG2A or ATG2B)-mediated lipid transfer by enhancing ATG2-association with phosphatidylinositol 3-monophosphate (PI3P)-containing membranes. Probably recruited to membranes through its PtdIns3P activity. This Homo sapiens (Human) protein is WD repeat domain phosphoinositide-interacting protein 4 (WDR45).